The chain runs to 862 residues: ATP-dependent helicase Lhr-Core (862 aa).

ATP-binding residues include Gln-37, Lys-60, Thr-61, Asp-178, Glu-179, Val-360, Arg-377, and His-380. The region spanning 41–233 is the Helicase ATP-binding domain; sequence IMDIHRGRNV…FLVGYSYGSE (193 aa). The DEAH box signature appears at 178–181; the sequence is DEIH. Positions 269–424 constitute a Helicase C-terminal domain; the sequence is ALYDILHDLI…SIKVPENCLD (156 aa). The segment at 425–513 is WH domain; it reads VLAQHIYGMA…LYSTNIGTIP (89 aa). Residues 514 to 862 form a domain 4 region; sequence DRSAAVVKCG…HQAIIDEIKR (349 aa).

This sequence belongs to the Lhr helicase family. Lhr-Core subfamily. Monomer.

The enzyme catalyses Couples ATP hydrolysis with the unwinding of duplex DNA by translocating in the 3'-5' direction.. The catalysed reaction is ATP + H2O = ADP + phosphate + H(+). In terms of biological role, DNA helicase that translocates in a 3'-5' direction on single-stranded (ss)DNA, probably involved in DNA repair. Most active on three- or four-stranded forked DNA; flayed structures and Holliday junction (HJ) substrates are unwound slightly less well. Also unwinds 3'-tailed duplexes; both RNA:DNA hybrids and double-stranded (ds)DNA with a 3'-single strand (ss)DNA loading strand are unwound. Substrates where the helicase loads on a 3'-ssRNA tail (DNA:RNA and RNA:RNA) were not tested. Blunt-ended dsDNA is not a substrate. Probably involved in replication-coupled DNA repair; remodeling of fork DNA after binding by Lhr generates ssDNA for ATP-dependent DNA translocation. The protein is ATP-dependent helicase Lhr-Core of Methanothermobacter thermautotrophicus (strain ATCC 29096 / DSM 1053 / JCM 10044 / NBRC 100330 / Delta H) (Methanobacterium thermoautotrophicum).